Consider the following 484-residue polypeptide: Replication-associated protein (484 aa).

A Nuclear localization signal motif is present at residues 146–153 (IRKYHQSV).

It is found in the host nucleus. Its function is as follows. Plays an essential for the replication of viral DNA. Presumably cleaves viral genomic dsRNA replicative form to initiate rolling circle replication. The protein is Replication-associated protein of Chaetoceros (Chaetoceros sp. DNA virus 7).